A 199-amino-acid polypeptide reads, in one-letter code: Molybdenum cofactor guanylyltransferase (199 aa).

GTP-binding positions include 12-14, Lys-25, Asn-53, Asp-71, and Asp-101; that span reads LAG. Asp-101 lines the Mg(2+) pocket.

Belongs to the MobA family. In terms of assembly, monomer. The cofactor is Mg(2+).

Its subcellular location is the cytoplasm. The enzyme catalyses Mo-molybdopterin + GTP + H(+) = Mo-molybdopterin guanine dinucleotide + diphosphate. Functionally, transfers a GMP moiety from GTP to Mo-molybdopterin (Mo-MPT) cofactor (Moco or molybdenum cofactor) to form Mo-molybdopterin guanine dinucleotide (Mo-MGD) cofactor. This chain is Molybdenum cofactor guanylyltransferase, found in Cupriavidus pinatubonensis (strain JMP 134 / LMG 1197) (Cupriavidus necator (strain JMP 134)).